Reading from the N-terminus, the 410-residue chain is Sprouty-related, EVH1 domain-containing protein 3 (410 aa).

The WH1 domain maps to 1–113 (MVRVRAVVMA…KSLLAALAAL (113 aa)). The disordered stretch occupies residues 117–210 (SLTPSSSSSS…PEPSEPLAGA (94 aa)). Composition is skewed to low complexity over residues 120-130 (PSSSSSSSSPS) and 147-165 (DSSSSHSRQETPPSAAAAP). The KBD domain maps to 195 to 244 (LPFTGIPEPSEPLAGAGGLGWGGRGYEDYRRSGPPAPLALSTCVVRFAKT). Arginine 240 bears the Asymmetric dimethylarginine mark. Residue arginine 248 is modified to Omega-N-methylarginine. The tract at residues 258 to 288 (LPAPLTEAAPPAPPARPPPGPGPSSAPAKAS) is disordered. Positions 267–281 (PPAPPARPPPGPGPS) are enriched in pro residues. Positions 296-407 (RCVHCRALFR…CAGCGGRHEE (112 aa)) constitute an SPR domain.

Interacts with palmitoyltransferase ZDHHC17/HIP14; the interaction leads to palmitoylation of SPRED3. In terms of processing, phosphorylated on tyrosine. Palmitoylated by ZDHHC17/HIP14. Post-translationally, ubiquitinated.

Its subcellular location is the cell membrane. Its function is as follows. Tyrosine kinase substrate that inhibits growth-factor-mediated activation of MAP kinase. Inhibits fibroblast growth factor (FGF)-induced retinal lens fiber differentiation, probably by inhibiting FGF-mediated phosphorylation of ERK1/2. Inhibits TGFB-induced epithelial-to-mesenchymal transition in lens epithelial cells. This chain is Sprouty-related, EVH1 domain-containing protein 3 (SPRED3), found in Homo sapiens (Human).